We begin with the raw amino-acid sequence, 227 residues long: Cytochrome c oxidase subunit 2 (227 aa).

Residues M1–S14 are Mitochondrial intermembrane-facing. A helical membrane pass occupies residues P15–M45. The Mitochondrial matrix portion of the chain corresponds to L46–Q59. A helical membrane pass occupies residues E60–M87. Over D88 to S227 the chain is Mitochondrial intermembrane. Cu cation is bound by residues H161, C196, E198, C200, H204, and M207. E198 contributes to the Mg(2+) binding site.

It belongs to the cytochrome c oxidase subunit 2 family. In terms of assembly, component of the cytochrome c oxidase (complex IV, CIV), a multisubunit enzyme composed of 14 subunits. The complex is composed of a catalytic core of 3 subunits MT-CO1, MT-CO2 and MT-CO3, encoded in the mitochondrial DNA, and 11 supernumerary subunits COX4I, COX5A, COX5B, COX6A, COX6B, COX6C, COX7A, COX7B, COX7C, COX8 and NDUFA4, which are encoded in the nuclear genome. The complex exists as a monomer or a dimer and forms supercomplexes (SCs) in the inner mitochondrial membrane with NADH-ubiquinone oxidoreductase (complex I, CI) and ubiquinol-cytochrome c oxidoreductase (cytochrome b-c1 complex, complex III, CIII), resulting in different assemblies (supercomplex SCI(1)III(2)IV(1) and megacomplex MCI(2)III(2)IV(2)). Found in a complex with TMEM177, COA6, COX18, COX20, SCO1 and SCO2. Interacts with TMEM177 in a COX20-dependent manner. Interacts with COX20. Interacts with COX16. Requires Cu cation as cofactor.

The protein resides in the mitochondrion inner membrane. The catalysed reaction is 4 Fe(II)-[cytochrome c] + O2 + 8 H(+)(in) = 4 Fe(III)-[cytochrome c] + 2 H2O + 4 H(+)(out). Its function is as follows. Component of the cytochrome c oxidase, the last enzyme in the mitochondrial electron transport chain which drives oxidative phosphorylation. The respiratory chain contains 3 multisubunit complexes succinate dehydrogenase (complex II, CII), ubiquinol-cytochrome c oxidoreductase (cytochrome b-c1 complex, complex III, CIII) and cytochrome c oxidase (complex IV, CIV), that cooperate to transfer electrons derived from NADH and succinate to molecular oxygen, creating an electrochemical gradient over the inner membrane that drives transmembrane transport and the ATP synthase. Cytochrome c oxidase is the component of the respiratory chain that catalyzes the reduction of oxygen to water. Electrons originating from reduced cytochrome c in the intermembrane space (IMS) are transferred via the dinuclear copper A center (CU(A)) of subunit 2 and heme A of subunit 1 to the active site in subunit 1, a binuclear center (BNC) formed by heme A3 and copper B (CU(B)). The BNC reduces molecular oxygen to 2 water molecules using 4 electrons from cytochrome c in the IMS and 4 protons from the mitochondrial matrix. This is Cytochrome c oxidase subunit 2 (MT-CO2) from Antilocapra americana (Pronghorn).